We begin with the raw amino-acid sequence, 132 residues long: Small ribosomal subunit protein eS24 (132 aa).

A compositionally biased stretch (basic and acidic residues) spans 90–100 (RLARHGLFEKK). The tract at residues 90 to 132 (RLARHGLFEKKKTSRKQRKERKNRMKKVRGTKKASVGASKKKD) is disordered. Residues 101–121 (KTSRKQRKERKNRMKKVRGTK) are compositionally biased toward basic residues.

The protein belongs to the eukaryotic ribosomal protein eS24 family. As to quaternary structure, component of the small ribosomal subunit.

Its subcellular location is the cytoplasm. Its function is as follows. Component of the small ribosomal subunit. The ribosome is a large ribonucleoprotein complex responsible for the synthesis of proteins in the cell. Required for processing of pre-rRNA and maturation of 40S ribosomal subunits. The polypeptide is Small ribosomal subunit protein eS24 (rps24) (Takifugu rubripes (Japanese pufferfish)).